The chain runs to 412 residues: Multifunctional CCA protein (412 aa).

Residues glycine 8 and arginine 11 each contribute to the ATP site. Positions 8 and 11 each coordinate CTP. Mg(2+) is bound by residues glutamate 21 and aspartate 23. Residues arginine 91, arginine 137, and arginine 140 each coordinate ATP. CTP-binding residues include arginine 91, arginine 137, and arginine 140. An HD domain is found at 228–329 (TGIHTLMTLA…LKLFNAIDVW (102 aa)).

The protein belongs to the tRNA nucleotidyltransferase/poly(A) polymerase family. Bacterial CCA-adding enzyme type 1 subfamily. In terms of assembly, monomer. Can also form homodimers and oligomers. Mg(2+) serves as cofactor. The cofactor is Ni(2+).

It carries out the reaction a tRNA precursor + 2 CTP + ATP = a tRNA with a 3' CCA end + 3 diphosphate. The enzyme catalyses a tRNA with a 3' CCA end + 2 CTP + ATP = a tRNA with a 3' CCACCA end + 3 diphosphate. Catalyzes the addition and repair of the essential 3'-terminal CCA sequence in tRNAs without using a nucleic acid template. Adds these three nucleotides in the order of C, C, and A to the tRNA nucleotide-73, using CTP and ATP as substrates and producing inorganic pyrophosphate. tRNA 3'-terminal CCA addition is required both for tRNA processing and repair. Also involved in tRNA surveillance by mediating tandem CCA addition to generate a CCACCA at the 3' terminus of unstable tRNAs. While stable tRNAs receive only 3'-terminal CCA, unstable tRNAs are marked with CCACCA and rapidly degraded. The chain is Multifunctional CCA protein from Yersinia pestis.